Here is a 775-residue protein sequence, read N- to C-terminus: Dipeptidyl peptidase 4 (775 aa).

An N-terminal signal peptide occupies residues 1-15 (MKFLSLLLLAGIAQA). N-linked (GlcNAc...) asparagine glycosylation is found at Asn-81, Asn-111, Asn-170, and Asn-219. Residues Ser-613, Asp-690, and His-725 each act as charge relay system in the active site.

It belongs to the peptidase S9B family.

The protein localises to the secreted. The enzyme catalyses Release of an N-terminal dipeptide, Xaa-Yaa-|-Zaa-, from a polypeptide, preferentially when Yaa is Pro, provided Zaa is neither Pro nor hydroxyproline.. Functionally, extracellular dipeptidyl-peptidase which removes N-terminal dipeptides sequentially from polypeptides having unsubstituted N-termini provided that the penultimate residue is proline. Contributes to pathogenicity. The chain is Dipeptidyl peptidase 4 (DPP4) from Trichophyton equinum (Horse ringworm fungus).